We begin with the raw amino-acid sequence, 155 residues long: Ribosomal RNA large subunit methyltransferase H (155 aa).

Residues leucine 72, glycine 103, and 122–127 each bind S-adenosyl-L-methionine; that span reads LSPLTF.

This sequence belongs to the RNA methyltransferase RlmH family. As to quaternary structure, homodimer.

It localises to the cytoplasm. It carries out the reaction pseudouridine(1915) in 23S rRNA + S-adenosyl-L-methionine = N(3)-methylpseudouridine(1915) in 23S rRNA + S-adenosyl-L-homocysteine + H(+). Functionally, specifically methylates the pseudouridine at position 1915 (m3Psi1915) in 23S rRNA. This is Ribosomal RNA large subunit methyltransferase H from Alkalilimnicola ehrlichii (strain ATCC BAA-1101 / DSM 17681 / MLHE-1).